A 446-amino-acid chain; its full sequence is Methylenetetrahydrofolate--tRNA-(uracil-5-)-methyltransferase TrmFO (446 aa).

8 to 13 (GGGLAG) contacts FAD.

It belongs to the MnmG family. TrmFO subfamily. FAD serves as cofactor.

The protein localises to the cytoplasm. The catalysed reaction is uridine(54) in tRNA + (6R)-5,10-methylene-5,6,7,8-tetrahydrofolate + NADH + H(+) = 5-methyluridine(54) in tRNA + (6S)-5,6,7,8-tetrahydrofolate + NAD(+). The enzyme catalyses uridine(54) in tRNA + (6R)-5,10-methylene-5,6,7,8-tetrahydrofolate + NADPH + H(+) = 5-methyluridine(54) in tRNA + (6S)-5,6,7,8-tetrahydrofolate + NADP(+). In terms of biological role, catalyzes the folate-dependent formation of 5-methyl-uridine at position 54 (M-5-U54) in all tRNAs. This is Methylenetetrahydrofolate--tRNA-(uracil-5-)-methyltransferase TrmFO from Zymomonas mobilis subsp. mobilis (strain ATCC 31821 / ZM4 / CP4).